The primary structure comprises 121 residues: Homeobox protein HD-6 (121 aa).

The homeobox DNA-binding region spans 28–87; the sequence is PKRSRIQLHDWQSMLLEHSFRMNPYPDRIEKYNLFLKTKIPMKNVKIWFQNRRAREKSFY.

The protein resides in the nucleus. The chain is Homeobox protein HD-6 (HD-6) from Encephalitozoon cuniculi (strain GB-M1) (Microsporidian parasite).